A 284-amino-acid polypeptide reads, in one-letter code: Malonyl-[acyl-carrier protein] O-methyltransferase (284 aa).

It belongs to the methyltransferase superfamily.

It carries out the reaction malonyl-[ACP] + S-adenosyl-L-methionine = malonyl-[ACP] methyl ester + S-adenosyl-L-homocysteine. It functions in the pathway cofactor biosynthesis; biotin biosynthesis. Its function is as follows. Converts the free carboxyl group of a malonyl-thioester to its methyl ester by transfer of a methyl group from S-adenosyl-L-methionine (SAM). It allows to synthesize pimeloyl-ACP via the fatty acid synthetic pathway. The polypeptide is Malonyl-[acyl-carrier protein] O-methyltransferase (Legionella pneumophila subsp. pneumophila (strain Philadelphia 1 / ATCC 33152 / DSM 7513)).